Here is a 355-residue protein sequence, read N- to C-terminus: UDP-N-acetylglucosamine--N-acetylmuramyl-(pentapeptide) pyrophosphoryl-undecaprenol N-acetylglucosamine transferase (355 aa).

UDP-N-acetyl-alpha-D-glucosamine is bound by residues 15-17 (TGG), Asn-127, Arg-163, Ser-191, Ile-244, 263-268 (ALTVSE), and Gln-288.

The protein belongs to the glycosyltransferase 28 family. MurG subfamily.

The protein localises to the cell inner membrane. It catalyses the reaction di-trans,octa-cis-undecaprenyl diphospho-N-acetyl-alpha-D-muramoyl-L-alanyl-D-glutamyl-meso-2,6-diaminopimeloyl-D-alanyl-D-alanine + UDP-N-acetyl-alpha-D-glucosamine = di-trans,octa-cis-undecaprenyl diphospho-[N-acetyl-alpha-D-glucosaminyl-(1-&gt;4)]-N-acetyl-alpha-D-muramoyl-L-alanyl-D-glutamyl-meso-2,6-diaminopimeloyl-D-alanyl-D-alanine + UDP + H(+). Its pathway is cell wall biogenesis; peptidoglycan biosynthesis. In terms of biological role, cell wall formation. Catalyzes the transfer of a GlcNAc subunit on undecaprenyl-pyrophosphoryl-MurNAc-pentapeptide (lipid intermediate I) to form undecaprenyl-pyrophosphoryl-MurNAc-(pentapeptide)GlcNAc (lipid intermediate II). This Salmonella typhi protein is UDP-N-acetylglucosamine--N-acetylmuramyl-(pentapeptide) pyrophosphoryl-undecaprenol N-acetylglucosamine transferase.